A 240-amino-acid chain; its full sequence is Prolactin-8A6 (240 aa).

An N-terminal signal peptide occupies residues 1-30; sequence MALLLSQPHFSGPLLLLVVSNLLLWEKAAS. Intrachain disulfides connect Cys34–Cys41, Cys101–Cys216, and Cys233–Cys240. Asn212 is a glycosylation site (N-linked (GlcNAc...) asparagine).

It belongs to the somatotropin/prolactin family. As to expression, expressed specifically in the spongiotrophoblast and trophoblast giant cells from the junctional zone of the chorioallantoic placenta.

It localises to the secreted. The sequence is that of Prolactin-8A6 (Prl8a6) from Mus musculus (Mouse).